A 795-amino-acid chain; its full sequence is Lon protease (795 aa).

Residues 17–214 (YPLMPLRDIV…KVYKFLQDEI (198 aa)) form the Lon N-terminal domain. 370 to 377 (GPPGVGKT) serves as a coordination point for ATP. The Lon proteolytic domain occupies 605-787 (KPLVGVATGL…EEVFKIALVR (183 aa)). Residues Ser-692 and Lys-735 contribute to the active site.

This sequence belongs to the peptidase S16 family. As to quaternary structure, homohexamer. Organized in a ring with a central cavity.

The protein localises to the cytoplasm. The catalysed reaction is Hydrolysis of proteins in presence of ATP.. ATP-dependent serine protease that mediates the selective degradation of mutant and abnormal proteins as well as certain short-lived regulatory proteins. Required for cellular homeostasis and for survival from DNA damage and developmental changes induced by stress. Degrades polypeptides processively to yield small peptide fragments that are 5 to 10 amino acids long. Binds to DNA in a double-stranded, site-specific manner. The chain is Lon protease from Aquifex aeolicus (strain VF5).